Consider the following 480-residue polypeptide: Outer capsid protein VP5 (480 aa).

The interval 1–48 (MTSKRLGARFPGFLNRIGSGITRAARSDTTKRIPSAAGRAVERVAASE) is involved in membrane permeabilization.

It belongs to the orbivirus VP5 family.

It is found in the virion. Its function is as follows. VP5 protein is one of the two proteins (with VP2) which constitute the virus particle outer capsid. Acts as a membrane permeabilization protein that mediates release of viral particles from endosomal compartments into the cytoplasm. Permeabilization activity is probably negatively regulated by VP2 and is triggered by endosomal degradation of VP2 and exposure to low pH. The sequence is that of Outer capsid protein VP5 (Segment-6) from Ixodes (gulls).